The following is a 261-amino-acid chain: Zaragozic acid A biosynthesis cluster protein 8 (261 aa).

Polar residues predominate over residues 242 to 254 (GTRSHTPAATQRR). The segment at 242-261 (GTRSHTPAATQRRGQGRGCG) is disordered.

It participates in secondary metabolite biosynthesis. Functionally, part of the gene cluster that mediates the biosynthesis of squalestatin S1 (SQS1, also known as zaragozic acid A), a heavily oxidized fungal polyketide that offers potent cholesterol lowering activity by targeting squalene synthase (SS). SQS1 is composed of a 2,8-dioxobicyclic[3.2.1]octane-3,4,5-tricarboxyclic acid core that is connected to two lipophilic polyketide arms. These initial steps feature the priming of an unusual benzoic acid starter unit onto the highly reducing polyketide synthase clz14, followed by oxaloacetate extension and product release to generate a tricarboxylic acid containing product. The phenylalanine ammonia lyase (PAL) clz10 and the acyl-CoA ligase clz12 are involved in transforming phenylalanine into benzoyl-CoA. The citrate synthase-like protein clz17 is involved in connecting the C-alpha-carbons of the hexaketide chain and oxaloacetate to afford the tricarboxylic acid unit. The potential hydrolytic enzymes, clz11 and clz13, are in close proximity to pks2 and may participate in product release. On the other side, the tetraketide arm is synthesized by a the squalestatin tetraketide synthase clz2 and enzymatically esterified to the core in the last biosynthetic step, by the acetyltransferase clz6. The biosynthesis of the tetraketide must involve 3 rounds of chain extension. After the first and second rounds methyl-transfer occurs, and in all rounds of extension the ketoreductase and dehydratase are active. The enoyl reductase and C-MeT of clz2 are not active in the final round of extension. The acetyltransferase clz6 appears to have a broad substrate selectivity for its acyl CoA substrate, allowing the in vitro synthesis of novel squalestatins. The biosynthesis of SQS1 requires several oxidative steps likely performed by oxidoreductases clz3, clz15 and clz16. Finally, in support of the identification of the cluster as being responsible for SQS1 production, the cluster contains a gene encoding a putative squalene synthase (SS) clz20, suggesting a likely mechanism for self-resistance. This chain is Zaragozic acid A biosynthesis cluster protein 8, found in Cochliobolus lunatus (Filamentous fungus).